Here is a 318-residue protein sequence, read N- to C-terminus: Myoblast determination protein 1 (318 aa).

A Peptide (Met-Gly) (interchain with G-Cter in ubiquitin) cross-link involves residue methionine 1. Position 104 is an N6-methyllysine; by EHMT2 (lysine 104). Positions 109–160 (DRRKAATMRERRRLSKVNEAFETLKRCTSSNPNQRLPKVEILRNAIRYIEGL) constitute a bHLH domain. 2 disordered regions span residues 174-224 (AAAA…RRRN) and 266-318 (APAL…YQVL). Positions 197 to 207 (SDASSPRSNCS) are enriched in polar residues. Residues 266–276 (APALLLADAPP) show a composition bias toward low complexity.

In terms of assembly, efficient DNA binding requires dimerization with another bHLH protein. Seems to form active heterodimers with ITF-2. Interacts with SUV39H1. Interacts with DDX5. Interacts with CHD2. Interacts with TSC22D3. Interacts with SETD3. Interacts with P-TEFB complex; promotes the transcriptional activity of MYOD1 through its CDK9-mediated phosphorylation. Interacts with CSRP3. Interacts with NUPR1. In terms of processing, phosphorylated by CDK9. This phosphorylation promotes its function in muscle differentiation. Post-translationally, acetylated by a complex containing EP300 and PCAF. The acetylation is essential to activate target genes. Conversely, its deacetylation by SIRT1 inhibits its function. Ubiquitinated on the N-terminus; which is required for proteasomal degradation. In terms of processing, methylation at Lys-104 by EHMT2/G9a inhibits myogenic activity.

It is found in the nucleus. In terms of biological role, acts as a transcriptional activator that promotes transcription of muscle-specific target genes and plays a role in muscle differentiation. Together with MYF5 and MYOG, co-occupies muscle-specific gene promoter core region during myogenesis. Induces fibroblasts to differentiate into myoblasts. Interacts with and is inhibited by the twist protein. This interaction probably involves the basic domains of both proteins. The polypeptide is Myoblast determination protein 1 (MYOD1) (Bos taurus (Bovine)).